The primary structure comprises 138 residues: MRTLWIVAVWLMSVEGNLYQFGKMIKNKTGKPAMFSYSAYGCYCGWGGQGKPQDASDRCCFVHDCCYTRVNDCSPKMTSYSYSFENRDIICGDDDSCRKAVCECDREAAICLGENVNTYDEKYRFYSSSHCVEETEQC.

The signal sequence occupies residues 1–16 (MRTLWIVAVWLMSVEG). 7 disulfide bridges follow: cysteine 42–cysteine 131, cysteine 44–cysteine 60, cysteine 59–cysteine 111, cysteine 65–cysteine 138, cysteine 66–cysteine 104, cysteine 73–cysteine 97, and cysteine 91–cysteine 102. Positions 43, 45, and 47 each coordinate Ca(2+). Histidine 63 is an active-site residue. Ca(2+) is bound at residue aspartate 64. Aspartate 105 is a catalytic residue.

This sequence belongs to the phospholipase A2 family. Group II subfamily. The cofactor is Ca(2+).

It localises to the secreted. It catalyses the reaction a 1,2-diacyl-sn-glycero-3-phosphocholine + H2O = a 1-acyl-sn-glycero-3-phosphocholine + a fatty acid + H(+). This is Phospholipase A2 EC1 from Echis coloratus (Carpet viper).